The primary structure comprises 260 residues: Crotonyl-CoA hydratase (260 aa).

The active-site Nucleophile is E114. Catalysis depends on E134, which acts as the Proton acceptor.

The protein belongs to the enoyl-CoA hydratase/isomerase family. In terms of assembly, homotetramer.

It is found in the cytoplasm. The enzyme catalyses 3-hydroxybutanoyl-CoA = (2E)-butenoyl-CoA + H2O. It carries out the reaction a short-chain (3S)-3-hydroxyacyl-CoA = a short-chain (2E)-enoyl-CoA + H2O. It functions in the pathway lipid metabolism; butanoate metabolism. Involved in syntrophic growth of S.wolfei with butyrate, as part of the butyrate oxidation pathway. Probably catalyzes the hydration of crotonyl-CoA to 3-hydroxybutyryl-CoA. In Syntrophomonas wolfei subsp. wolfei (strain DSM 2245B / Goettingen), this protein is Crotonyl-CoA hydratase.